A 1823-amino-acid chain; its full sequence is WD repeat-containing protein DDB_G0292056 (1823 aa).

The disordered stretch occupies residues 1–68 (MTYNNNNNYL…IGNSSGGGGV (68 aa)). The span at 16 to 61 (TSTSTSTSTSTPTSTKTSPLNTSSSSNILKSNSRNPSPNNPTNIGN) shows a compositional bias: low complexity. WD repeat units follow at residues 138–177 (QSKW…YPLL), 182–222 (SHQR…KAVK), 228–267 (SHIL…QELN), 270–310 (VHSA…PKST), 312–354 (ITSN…YSTP), and 360–405 (GHTD…KDLF). Disordered stretches follow at residues 418-461 (PTTT…LLST), 530-562 (QPDD…NNNN), 649-687 (NITE…GFLK), 714-778 (IDIS…YRPG), 805-840 (ILTN…TNDQ), 883-940 (IPNN…SSTS), 966-996 (SSSS…NPPR), 1014-1058 (NNIT…NDNP), and 1122-1186 (QQLV…NGKS). Composition is skewed to low complexity over residues 419 to 432 (TTTT…TTTT) and 440 to 461 (LNES…LLST). 2 stretches are compositionally biased toward low complexity: residues 654-680 (NNNN…NNNN) and 717-748 (SQQQ…QQQQ). Polar residues-rich tracts occupy residues 749 to 768 (FLTA…SPTS) and 827 to 840 (MNAS…TNDQ). Composition is skewed to low complexity over residues 885–926 (NNNK…SSNN), 966–993 (SSSS…KNIN), 1014–1041 (NNIT…NRLN), and 1127–1183 (SSSP…NNGN). The stretch at 1207–1250 (ANSYILSGKPVEEICKYNSELAEKENRKDLVKLWNTLGMITDSK) is one WD 7 repeat. 3 disordered regions span residues 1264–1307 (SHFG…LHQS), 1697–1725 (QQQP…HTHN), and 1764–1823 (PQQE…MFSN). The segment covering 1282–1293 (STGIASSTGSNS) has biased composition (low complexity). Positions 1710–1725 (MSGTSHYHQQQPHTHN) are enriched in polar residues.

This Dictyostelium discoideum (Social amoeba) protein is WD repeat-containing protein DDB_G0292056.